The following is a 165-amino-acid chain: Cytochrome c-550-like protein (165 aa).

The first 30 residues, 1–30 (MLNKSLLIRFVLTILIIVQVIIFDTQPVQA), serve as a signal peptide directing secretion. C75, C78, H79, and C129 together coordinate heme c.

The protein belongs to the cytochrome c family. PsbV subfamily. Heme c is required as a cofactor.

Its subcellular location is the cellular thylakoid membrane. Functionally, possible low-potential cytochrome c. This is Cytochrome c-550-like protein (psbV2) from Trichodesmium erythraeum (strain IMS101).